The following is a 93-amino-acid chain: RNA-binding protein Hfq (93 aa).

Positions 9–68 constitute a Sm domain; that stretch reads DPFLNALRKERIPVSIFLVNGIKLQGQIESFDQYVVLLKNAVSQMVYKHAISTVVPARNP. A compositionally biased stretch (low complexity) spans 74-86; it reads PAMAAGATAAPAA. Residues 74 to 93 form a disordered region; sequence PAMAAGATAAPAADEGYGNQ.

The protein belongs to the Hfq family. As to quaternary structure, homohexamer.

In terms of biological role, RNA chaperone that binds small regulatory RNA (sRNAs) and mRNAs to facilitate mRNA translational regulation in response to envelope stress, environmental stress and changes in metabolite concentrations. Also binds with high specificity to tRNAs. The protein is RNA-binding protein Hfq of Alcanivorax borkumensis (strain ATCC 700651 / DSM 11573 / NCIMB 13689 / SK2).